A 478-amino-acid polypeptide reads, in one-letter code: NADH-quinone oxidoreductase subunit N 1 (478 aa).

14 helical membrane passes run 6–26 (TVLPILFLAIAGMIMLMSGVF), 33–53 (FAITAASIVVLAIAARLLVAA), 71–91 (FADVLVALGAIGALALSVTFN), 99–119 (FEFPVLVLFAVTGMVVLVSAS), 121–141 (LITLYIGFEIQSLALYVLAAF), 156–176 (FVLGALSSGLLLYGISLVYGF), 193–212 (PTAAVGSTIGLVFVLVGLAF), 244–264 (IAVFALLLRVMLGPFGPVLGQ), 265–285 (WRDLVQIIAAASMVIGAIGAI), 299–319 (IGHMGYALMGLAAGTAAGVSG), 321–341 (LIYLAIYLVMSLGTFGCIIAM), 364–384 (FAFVLAVMMWSMAGIPPLAGF), 388–408 (FYVFAAAINAGLGPLAVLGII), and 438–458 (AGVSLVMGAAAAFTVLFVFHP).

It belongs to the complex I subunit 2 family. In terms of assembly, NDH-1 is composed of 14 different subunits. Subunits NuoA, H, J, K, L, M, N constitute the membrane sector of the complex.

Its subcellular location is the cell inner membrane. It carries out the reaction a quinone + NADH + 5 H(+)(in) = a quinol + NAD(+) + 4 H(+)(out). In terms of biological role, NDH-1 shuttles electrons from NADH, via FMN and iron-sulfur (Fe-S) centers, to quinones in the respiratory chain. The immediate electron acceptor for the enzyme in this species is believed to be ubiquinone. Couples the redox reaction to proton translocation (for every two electrons transferred, four hydrogen ions are translocated across the cytoplasmic membrane), and thus conserves the redox energy in a proton gradient. This Acidiphilium cryptum (strain JF-5) protein is NADH-quinone oxidoreductase subunit N 1.